We begin with the raw amino-acid sequence, 76 residues long: uncharacterized protein (76 aa).

The signal sequence occupies residues 1–22 (MFTKALSVVLLTCALFSGQLMA).

This is an uncharacterized protein from Escherichia coli O157:H7.